The following is a 416-amino-acid chain: Signal recognition particle receptor FtsY (416 aa).

Basic residues predominate over residues 1-10 (MFSFFRRKKK). The segment at 1 to 24 (MFSFFRRKKKQETPALEEAQVQET) is disordered. GTP-binding positions include 224 to 231 (GINGAGKT), 304 to 308 (DTAGR), and 368 to 371 (TKLD).

Belongs to the GTP-binding SRP family. FtsY subfamily. In terms of assembly, part of the signal recognition particle protein translocation system, which is composed of SRP and FtsY. SRP is a ribonucleoprotein composed of Ffh and a 4.5S RNA molecule. Mg(2+) serves as cofactor.

It is found in the cell membrane. It localises to the cytoplasm. The enzyme catalyses GTP + H2O = GDP + phosphate + H(+). Functionally, involved in targeting and insertion of nascent membrane proteins into the cytoplasmic membrane. Acts as a receptor for the complex formed by the signal recognition particle (SRP) and the ribosome-nascent chain (RNC). Interaction with SRP-RNC leads to the transfer of the RNC complex to the Sec translocase for insertion into the membrane, the hydrolysis of GTP by both Ffh and FtsY, and the dissociation of the SRP-FtsY complex into the individual components. In Neisseria gonorrhoeae, this protein is Signal recognition particle receptor FtsY.